Consider the following 234-residue polypeptide: 5'-methylthioadenosine/S-adenosylhomocysteine nucleosidase (234 aa).

Catalysis depends on Glu12, which acts as the Proton acceptor. Substrate contacts are provided by residues Gly78, Ile152, and 173-174; that span reads ME. The active-site Proton donor is Asp197.

The protein belongs to the PNP/UDP phosphorylase family. MtnN subfamily.

The enzyme catalyses S-adenosyl-L-homocysteine + H2O = S-(5-deoxy-D-ribos-5-yl)-L-homocysteine + adenine. It catalyses the reaction S-methyl-5'-thioadenosine + H2O = 5-(methylsulfanyl)-D-ribose + adenine. The catalysed reaction is 5'-deoxyadenosine + H2O = 5-deoxy-D-ribose + adenine. Its pathway is amino-acid biosynthesis; L-methionine biosynthesis via salvage pathway; S-methyl-5-thio-alpha-D-ribose 1-phosphate from S-methyl-5'-thioadenosine (hydrolase route): step 1/2. Catalyzes the irreversible cleavage of the glycosidic bond in both 5'-methylthioadenosine (MTA) and S-adenosylhomocysteine (SAH/AdoHcy) to adenine and the corresponding thioribose, 5'-methylthioribose and S-ribosylhomocysteine, respectively. Also cleaves 5'-deoxyadenosine, a toxic by-product of radical S-adenosylmethionine (SAM) enzymes, into 5-deoxyribose and adenine. The polypeptide is 5'-methylthioadenosine/S-adenosylhomocysteine nucleosidase (Desulfotalea psychrophila (strain LSv54 / DSM 12343)).